We begin with the raw amino-acid sequence, 753 residues long: Nuclear hormone receptor family member daf-12 (753 aa).

Residues 1–109 form a disordered region; the sequence is MGTNGGVIAE…PDDGLLDSSE (109 aa). Residues 20–29 are compositionally biased toward basic and acidic residues; that stretch reads NPDKVEEPVV. Residues 30 to 44 are compositionally biased toward basic residues; it reads RRKRVTRRRHRRIHS. A DNA-binding region (nuclear receptor) is located at residues 115 to 190; sequence QKTCRVCGDH…VGMKKEWILN (76 aa). 2 consecutive NR C4-type zinc fingers follow at residues 118-138 and 154-173; these read CRVC…CESC and CPYS…CQKC. A Nuclear localization signal motif is present at residues 191–206; it reads EEQLRRRKNSRLNNTG. 3 disordered regions span residues 198-251, 266-314, and 376-410; these read KNSR…TINP, NAMP…GYDP, and GHPM…EKNH. Over residues 201-211 the composition is skewed to polar residues; sequence RLNNTGTCNKR. The segment covering 212–227 has biased composition (low complexity); the sequence is SQPGNQQSPQGPNQQP. Polar residues-rich tracts occupy residues 285–301 and 394–410; these read PVGS…SLTM and MSLS…EKNH. The 238-residue stretch at 516–753 folds into the NR LBD domain; it reads AELKALDAVR…ELPGEFFKIK (238 aa).

This sequence belongs to the nuclear hormone receptor family. Interacts with din-1 isoform d. In terms of tissue distribution, expressed throughout muscles of the pharynx. Expressed in epidermal seam cells, the vulva, head neurons, mature spermatheca, uterus and intestine.

It localises to the nucleus. Its function is as follows. Nuclear receptor which binds directly to response elements in target gene promoters. Activity is modulated by binding of steroid hormone ligands that include dafachronic acids. Regulates expression of genes involved in postembryonic development and the dauer diapause, in response to environmental cues. Inhibits the expression of let-7 family members when bound to corepressor din-1s which is an isoform of din-1. Plays a role in controlling the timing of seam cell development during the larval stages. Has a role in the immune response to bacterial infection, via regulation of let-7 miRNAs. Controls expression of genes that promote the aerobic catabolism of fatty acids for reproductive growth. May be involved in thermotolerance. This chain is Nuclear hormone receptor family member daf-12, found in Caenorhabditis elegans.